The primary structure comprises 615 residues: DNA mismatch repair protein MutL (615 aa).

The tract at residues 363–397 (FAEPAAREPVAPRYTPAPASGSRPAAPWPNAQPGY) is disordered. Residues 364 to 391 (AEPAAREPVAPRYTPAPASGSRPAAPWP) show a composition bias toward low complexity.

It belongs to the DNA mismatch repair MutL/HexB family.

In terms of biological role, this protein is involved in the repair of mismatches in DNA. It is required for dam-dependent methyl-directed DNA mismatch repair. May act as a 'molecular matchmaker', a protein that promotes the formation of a stable complex between two or more DNA-binding proteins in an ATP-dependent manner without itself being part of a final effector complex. The chain is DNA mismatch repair protein MutL from Shigella boydii serotype 18 (strain CDC 3083-94 / BS512).